An 83-amino-acid polypeptide reads, in one-letter code: Protein ShK-like4 (83 aa).

The N-terminal stretch at 1-21 (MDTRVIAVLFVAIMVLSSTNA) is a signal peptide. A propeptide spanning residues 22–48 (LPKQKGSYKNMNHADFLKGLDRASSKR) is cleaved from the precursor. 3 disulfides stabilise this stretch: C50/C82, C57/C75, and C67/C79. The ShKT domain maps to 50–83 (CRDSHWSCFFQSNYEDICSTAQAEECALSCGLCE).

Post-translationally, contains 3 disulfide bonds. Expressed in various neurons (ectodermal sensory cells) (in planulae and primary polyps). Not expressed in nematocytes.

In terms of biological role, probable neuropeptide. The chain is Protein ShK-like4 from Nematostella vectensis (Starlet sea anemone).